The primary structure comprises 449 residues: uncharacterized protein (449 aa).

Residues 1–13 show a composition bias toward basic residues; that stretch reads MPKAPKTKLHHAP. A disordered region spans residues 1–125; it reads MPKAPKTKLH…SQEEEEYEEL (125 aa). A Phosphoserine modification is found at serine 22. The span at 73 to 84 shows a compositional bias: polar residues; that stretch reads KPSQISAFISNG. A Phosphoserine modification is found at serine 156.

This sequence belongs to the bystin family.

This is an uncharacterized protein from Schizosaccharomyces pombe (strain 972 / ATCC 24843) (Fission yeast).